The primary structure comprises 452 residues: Glycine receptor subunit alpha-2 (452 aa).

A signal peptide spans 1 to 27; sequence MNRQLVNILTALFAFFLETNHFRTAFC. Residues 28–256 lie on the Extracellular side of the membrane; that stretch reads KDHDSRSGKQ…KFHLERQMGY (229 aa). The N-linked (GlcNAc...) asparagine glycan is linked to Asn-72. Arg-99 contributes to the glycine binding site. A strychnine-binding site is contributed by Arg-99. The N-linked (GlcNAc...) asparagine glycan is linked to Asn-103. A glycine-binding site is contributed by Ser-163. Cysteines 172 and 186 form a disulfide. Residues Glu-226 and Glu-228 each contribute to the Zn(2+) site. An intrachain disulfide couples Cys-232 to Cys-243. Thr-238 serves as a coordination point for glycine. Residue His-249 participates in Zn(2+) binding. The chain crosses the membrane as a helical span at residues 257–278; that stretch reads YLIQMYIPSLLIVILSWVSFWI. At 279–283 the chain is on the cytoplasmic side; it reads NMDAA. The helical transmembrane segment at 284–304 threads the bilayer; the sequence is PARVALGITTVLTMTTQSSGS. At 305–315 the chain is on the extracellular side; that stretch reads RASLPKVSYVK. A helical membrane pass occupies residues 316–336; it reads AIDIWMAVCLLFVFAALLEYA. The Cytoplasmic segment spans residues 337–420; it reads AVNFVSRQHK…FVDRAKRIDT (84 aa). A helical membrane pass occupies residues 421–441; that stretch reads ISRAAFPLAFLIFNIFYWITY. At 442 to 452 the chain is on the extracellular side; sequence KIIRHEDVHKK.

Belongs to the ligand-gated ion channel (TC 1.A.9) family. Glycine receptor (TC 1.A.9.3) subfamily. GLRA2 sub-subfamily. In terms of assembly, interacts with GLRB. Heteropentamer composed of GLRA2 and GLRB. Functional GLRB-GLRA2 heteropentamers contain four GLRA2 subunits and one GLRB subunit, although alternative subunit composition cannot be excluded. Homopentamer (in vitro). Both homopentamers and heteropentamers form functional ion channels, but their characteristics are subtly different.

Its subcellular location is the postsynaptic cell membrane. The protein localises to the synapse. The protein resides in the cell membrane. It localises to the cell projection. It catalyses the reaction chloride(in) = chloride(out). Its activity is regulated as follows. Channel opening is triggered by extracellular glycine. Channel opening is also triggered by taurine and beta-alanine. Inhibited by strychnine. Inhibited by picrotoxin. Channel activity is potentiated by 10-100 uM Zn(2+). Channel activity is marginally increased by 50 mM ethanol; it is strongly increased by a combination of 0.5 uM Zn(2+) and 50 mM ethanol. Channel activity is inhibited by 100-1000 uM Zn(2+). Its function is as follows. Subunit of heteromeric glycine-gated chloride channels. Plays a role in synaptic plasticity. Contributes to the generation of inhibitory postsynaptic currents, and is involved in the down-regulation of neuronal excitability. Plays a role in cellular responses to ethanol. This Homo sapiens (Human) protein is Glycine receptor subunit alpha-2.